The following is a 279-amino-acid chain: Four and a half LIM domains protein 2 (279 aa).

A C4-type zinc finger spans residues 7–31 (CHHCEDSLFGRKYVLREEQPYCVAC). LIM zinc-binding domains follow at residues 40–92 (CEEC…CTDC), 101–153 (CQEC…CVPC), and 162–212 (CVQC…CLGC). A Glycyl lysine isopeptide (Lys-Gly) (interchain with G-Cter in SUMO2) cross-link involves residue Lys-78. Glycyl lysine isopeptide (Lys-Gly) (interchain with G-Cter in SUMO2) cross-links involve residues Lys-167 and Lys-220. Residues 221-275 (CAGCANPISGLGGTKYISFEERQWHNDCFNCKKCSLSLVGRGFLTERDDILCPDC) form the LIM zinc-binding 4 domain. Ser-238 carries the post-translational modification Phosphoserine.

As to quaternary structure, interacts with ZNF638 and TTN/titin. Interacts with E4F1. Interacts with GRB7. Interacts with SIRT1 and FOXO1. Interacts with CEFIP and calcineurin. Interacts with FOXK1.

Its subcellular location is the cytoplasm. The protein resides in the nucleus. It localises to the myofibril. It is found in the sarcomere. The protein localises to the z line. In terms of biological role, may function as a molecular transmitter linking various signaling pathways to transcriptional regulation. Negatively regulates the transcriptional repressor E4F1 and may function in cell growth. Inhibits the transcriptional activity of FOXO1 and its apoptotic function by enhancing the interaction of FOXO1 with SIRT1 and FOXO1 deacetylation. Negatively regulates the calcineurin/NFAT signaling pathway in cardiomyocytes. This chain is Four and a half LIM domains protein 2 (FHL2), found in Bos taurus (Bovine).